The primary structure comprises 362 residues: 3-dehydroquinate synthase (362 aa).

NAD(+) is bound by residues 70–75 (DGESYK), 104–108 (GVVGD), 128–129 (TT), Lys141, and Lys150. Zn(2+) contacts are provided by Glu183, His246, and His263.

It belongs to the sugar phosphate cyclases superfamily. Dehydroquinate synthase family. It depends on Co(2+) as a cofactor. Requires Zn(2+) as cofactor. NAD(+) serves as cofactor.

It is found in the cytoplasm. The catalysed reaction is 7-phospho-2-dehydro-3-deoxy-D-arabino-heptonate = 3-dehydroquinate + phosphate. It participates in metabolic intermediate biosynthesis; chorismate biosynthesis; chorismate from D-erythrose 4-phosphate and phosphoenolpyruvate: step 2/7. Functionally, catalyzes the conversion of 3-deoxy-D-arabino-heptulosonate 7-phosphate (DAHP) to dehydroquinate (DHQ). The polypeptide is 3-dehydroquinate synthase (Saccharophagus degradans (strain 2-40 / ATCC 43961 / DSM 17024)).